Reading from the N-terminus, the 213-residue chain is Phycocyanobilin lyase subunit beta (213 aa).

The protein belongs to the CpcE/RpcE/PecE family. CpcE and CpcF associate to form a lyase.

Required for the chromophorylation of the CpcA gene product. This Thermosynechococcus vestitus (strain NIES-2133 / IAM M-273 / BP-1) protein is Phycocyanobilin lyase subunit beta (cpcF).